We begin with the raw amino-acid sequence, 386 residues long: Succinate--CoA ligase [ADP-forming] subunit beta (386 aa).

Residues 9 to 244 (KEILRKYGVS…LDEEDPKEIE (236 aa)) enclose the ATP-grasp domain. Residues Lys-46, 53-55 (GRG), Glu-99, Cys-102, and Glu-107 each bind ATP. Mg(2+) is bound by residues Asn-199 and Asp-213. Residues Asn-264 and 321-323 (GIM) contribute to the substrate site.

It belongs to the succinate/malate CoA ligase beta subunit family. Heterotetramer of two alpha and two beta subunits. It depends on Mg(2+) as a cofactor.

It carries out the reaction succinate + ATP + CoA = succinyl-CoA + ADP + phosphate. It catalyses the reaction GTP + succinate + CoA = succinyl-CoA + GDP + phosphate. The protein operates within carbohydrate metabolism; tricarboxylic acid cycle; succinate from succinyl-CoA (ligase route): step 1/1. Functionally, succinyl-CoA synthetase functions in the citric acid cycle (TCA), coupling the hydrolysis of succinyl-CoA to the synthesis of either ATP or GTP and thus represents the only step of substrate-level phosphorylation in the TCA. The beta subunit provides nucleotide specificity of the enzyme and binds the substrate succinate, while the binding sites for coenzyme A and phosphate are found in the alpha subunit. This is Succinate--CoA ligase [ADP-forming] subunit beta from Bacillus pumilus (strain SAFR-032).